A 171-amino-acid chain; its full sequence is Probable deoxyuridine 5'-triphosphate nucleotidohydrolase (171 aa).

This sequence belongs to the dCTP deaminase family. Archaeal dUTPase subfamily.

It catalyses the reaction dUTP + H2O = dUMP + diphosphate + H(+). Its pathway is pyrimidine metabolism; dUMP biosynthesis; dUMP from dCTP (dUTP route): step 2/2. Functionally, this enzyme is involved in nucleotide metabolism: it produces dUMP, the immediate precursor of thymidine nucleotides and it decreases the intracellular concentration of dUTP so that uracil cannot be incorporated into DNA. This chain is Probable deoxyuridine 5'-triphosphate nucleotidohydrolase, found in Methanosarcina mazei (strain ATCC BAA-159 / DSM 3647 / Goe1 / Go1 / JCM 11833 / OCM 88) (Methanosarcina frisia).